A 243-amino-acid polypeptide reads, in one-letter code: Zinc import ATP-binding protein ZnuC (243 aa).

The region spanning 4–219 (IAAHHLAVRR…PEYRALFGHG (216 aa)) is the ABC transporter domain. Residue 36 to 43 (GPNGSGKS) participates in ATP binding.

This sequence belongs to the ABC transporter superfamily. Zinc importer (TC 3.A.1.15.5) family. In terms of assembly, the complex is composed of two ATP-binding proteins (ZnuC), two transmembrane proteins (ZnuB) and a solute-binding protein (ZnuA).

It localises to the cell inner membrane. It carries out the reaction Zn(2+)(out) + ATP(in) + H2O(in) = Zn(2+)(in) + ADP(in) + phosphate(in) + H(+)(in). In terms of biological role, part of the ABC transporter complex ZnuABC involved in zinc import. Responsible for energy coupling to the transport system. This Cereibacter sphaeroides (strain ATCC 17023 / DSM 158 / JCM 6121 / CCUG 31486 / LMG 2827 / NBRC 12203 / NCIMB 8253 / ATH 2.4.1.) (Rhodobacter sphaeroides) protein is Zinc import ATP-binding protein ZnuC.